We begin with the raw amino-acid sequence, 343 residues long: 3-isopropylmalate dehydrogenase (343 aa).

Residues R94, R104, R128, and D218 each contribute to the substrate site. Mg(2+) is bound by residues D218, D242, and D246. Residue 278–290 participates in NAD(+) binding; it reads GSAPDIAGQNKAN.

Belongs to the isocitrate and isopropylmalate dehydrogenases family. LeuB type 2 subfamily. As to quaternary structure, homodimer. The cofactor is Mg(2+). Mn(2+) serves as cofactor.

Its subcellular location is the cytoplasm. It carries out the reaction (2R,3S)-3-isopropylmalate + NAD(+) = 4-methyl-2-oxopentanoate + CO2 + NADH. Its pathway is amino-acid biosynthesis; L-leucine biosynthesis; L-leucine from 3-methyl-2-oxobutanoate: step 3/4. In terms of biological role, catalyzes the oxidation of 3-carboxy-2-hydroxy-4-methylpentanoate (3-isopropylmalate) to 3-carboxy-4-methyl-2-oxopentanoate. The product decarboxylates to 4-methyl-2 oxopentanoate. In Bifidobacterium longum (strain DJO10A), this protein is 3-isopropylmalate dehydrogenase.